Consider the following 205-residue polypeptide: Outer-membrane lipoprotein carrier protein (205 aa).

A signal peptide spans Met1–Ala21.

The protein belongs to the LolA family. As to quaternary structure, monomer.

The protein resides in the periplasm. Its function is as follows. Participates in the translocation of lipoproteins from the inner membrane to the outer membrane. Only forms a complex with a lipoprotein if the residue after the N-terminal Cys is not an aspartate (The Asp acts as a targeting signal to indicate that the lipoprotein should stay in the inner membrane). This is Outer-membrane lipoprotein carrier protein from Francisella philomiragia subsp. philomiragia (strain ATCC 25017 / CCUG 19701 / FSC 153 / O#319-036).